Reading from the N-terminus, the 661-residue chain is Translation factor GUF1 homolog, mitochondrial (661 aa).

The region spanning 59 to 242 (ENIRNFCIVA…AIIDRIPSPK (184 aa)) is the tr-type G domain. GTP is bound by residues 68 to 75 (AHVDHGKS), 135 to 139 (DTPGH), and 189 to 192 (NKVD).

This sequence belongs to the TRAFAC class translation factor GTPase superfamily. Classic translation factor GTPase family. LepA subfamily.

The protein resides in the mitochondrion inner membrane. It catalyses the reaction GTP + H2O = GDP + phosphate + H(+). Functionally, promotes mitochondrial protein synthesis. May act as a fidelity factor of the translation reaction, by catalyzing a one-codon backward translocation of tRNAs on improperly translocated ribosomes. Binds to mitochondrial ribosomes in a GTP-dependent manner. The sequence is that of Translation factor GUF1 homolog, mitochondrial from Ixodes scapularis (Black-legged tick).